The following is a 644-amino-acid chain: Exoribonuclease 2 (644 aa).

The RNB domain maps to 189 to 516 (REDLTALNFV…NHRLLKAMIT (328 aa)). An S1 motif domain is found at 561-643 (DTRFTAEIID…ETRNVIARPV (83 aa)).

The protein belongs to the RNR ribonuclease family. RNase II subfamily.

The protein resides in the cytoplasm. It catalyses the reaction Exonucleolytic cleavage in the 3'- to 5'-direction to yield nucleoside 5'-phosphates.. Its function is as follows. Involved in mRNA degradation. Hydrolyzes single-stranded polyribonucleotides processively in the 3' to 5' direction. This Yersinia pseudotuberculosis serotype IB (strain PB1/+) protein is Exoribonuclease 2.